An 89-amino-acid polypeptide reads, in one-letter code: Small ribosomal subunit protein uS15 (89 aa).

Belongs to the universal ribosomal protein uS15 family. Part of the 30S ribosomal subunit. Forms a bridge to the 50S subunit in the 70S ribosome, contacting the 23S rRNA.

Its function is as follows. One of the primary rRNA binding proteins, it binds directly to 16S rRNA where it helps nucleate assembly of the platform of the 30S subunit by binding and bridging several RNA helices of the 16S rRNA. Forms an intersubunit bridge (bridge B4) with the 23S rRNA of the 50S subunit in the ribosome. The sequence is that of Small ribosomal subunit protein uS15 from Brevibacillus brevis (strain 47 / JCM 6285 / NBRC 100599).